The chain runs to 231 residues: Large ribosomal subunit protein uL1 (231 aa).

This sequence belongs to the universal ribosomal protein uL1 family. Part of the 50S ribosomal subunit.

Functionally, binds directly to 23S rRNA. The L1 stalk is quite mobile in the ribosome, and is involved in E site tRNA release. Protein L1 is also a translational repressor protein, it controls the translation of the L11 operon by binding to its mRNA. This is Large ribosomal subunit protein uL1 from Pseudomonas entomophila (strain L48).